Reading from the N-terminus, the 230-residue chain is Thymidylate synthase 1 (230 aa).

Arg-92–Arg-93 is a dUMP binding site. The Nucleophile role is filled by Cys-112. Residues Arg-132–Asp-135, Asn-143, and His-173–Tyr-175 contribute to the dUMP site. (6R)-5,10-methylene-5,6,7,8-tetrahydrofolate is bound at residue Asp-135.

It belongs to the thymidylate synthase family. Bacterial-type ThyA subfamily. Homodimer.

It is found in the cytoplasm. The enzyme catalyses dUMP + (6R)-5,10-methylene-5,6,7,8-tetrahydrofolate = 7,8-dihydrofolate + dTMP. It participates in pyrimidine metabolism; dTTP biosynthesis. Catalyzes the reductive methylation of 2'-deoxyuridine-5'-monophosphate (dUMP) to 2'-deoxythymidine-5'-monophosphate (dTMP) while utilizing 5,10-methylenetetrahydrofolate (mTHF) as the methyl donor and reductant in the reaction, yielding dihydrofolate (DHF) as a by-product. This enzymatic reaction provides an intracellular de novo source of dTMP, an essential precursor for DNA biosynthesis. This Bacillus amyloliquefaciens (Bacillus velezensis) protein is Thymidylate synthase 1.